A 579-amino-acid chain; its full sequence is Protein inscuteable homolog (579 aa).

Residues 74–89 (SVQRWMEDLKLMTECE) are important for interaction with GPSM2. The short motif at 576 to 579 (ESFV) is the PDZ-binding element.

In terms of assembly, interacts with ALS2CR19/PAR3B and F2RL2/PAR3. Interacts with GPSM1/AGS3 and GPSM2/LGN (via TPR repeat region). Identified in a complex with GPSM2 and F2RL2. Isoform 1 is expressed in various tissues with stronger expression in liver, kidney and small intestine. Isoform 2 is abundantly expressed in small intestine and to a lower extent in lung and pancreas.

It localises to the cytoplasm. The protein localises to the cell cortex. May function as an adapter linking the Par3 complex to the GPSM1/GPSM2 complex. Involved in spindle orientation during mitosis. May regulate cell proliferation and differentiation in the developing nervous system. May play a role in the asymmetric division of fibroblasts and participate in the process of stratification of the squamous epithelium. The protein is Protein inscuteable homolog (INSC) of Homo sapiens (Human).